Reading from the N-terminus, the 353-residue chain is UPF0283 membrane protein YcjF (353 aa).

A disordered region spans residues K16 to R35. Polar residues predominate over residues T20–E31. 3 helical membrane passes run M70–T90, V100–V120, and E213–W233.

The protein belongs to the UPF0283 family.

The protein localises to the cell inner membrane. In Salmonella heidelberg (strain SL476), this protein is UPF0283 membrane protein YcjF.